Reading from the N-terminus, the 211-residue chain is Cytochrome c biogenesis ATP-binding export protein CcmA (211 aa).

An ABC transporter domain is found at 17 to 209 (LDVEDVTVFR…PSLAHVESFW (193 aa)). 49 to 56 (GPNGAGKS) is a binding site for ATP.

The protein belongs to the ABC transporter superfamily. CcmA exporter (TC 3.A.1.107) family. In terms of assembly, the complex is composed of two ATP-binding proteins (CcmA) and two transmembrane proteins (CcmB).

Its subcellular location is the cell inner membrane. It carries out the reaction heme b(in) + ATP + H2O = heme b(out) + ADP + phosphate + H(+). In terms of biological role, part of the ABC transporter complex CcmAB involved in the biogenesis of c-type cytochromes; once thought to export heme, this seems not to be the case, but its exact role is uncertain. Responsible for energy coupling to the transport system. This is Cytochrome c biogenesis ATP-binding export protein CcmA from Gluconobacter oxydans (strain 621H) (Gluconobacter suboxydans).